We begin with the raw amino-acid sequence, 658 residues long: Threonine--tRNA ligase (658 aa).

In terms of domain architecture, TGS spans 1–64; the sequence is MSNTVSLQFP…GASGKVEIIT (64 aa). Positions 246–548 are catalytic; it reads DHRRLGREMD…LIENFAGHMP (303 aa). Cysteine 343, histidine 394, and histidine 525 together coordinate Zn(2+).

It belongs to the class-II aminoacyl-tRNA synthetase family. As to quaternary structure, homodimer. It depends on Zn(2+) as a cofactor.

It localises to the cytoplasm. It carries out the reaction tRNA(Thr) + L-threonine + ATP = L-threonyl-tRNA(Thr) + AMP + diphosphate + H(+). Catalyzes the attachment of threonine to tRNA(Thr) in a two-step reaction: L-threonine is first activated by ATP to form Thr-AMP and then transferred to the acceptor end of tRNA(Thr). Also edits incorrectly charged L-seryl-tRNA(Thr). The chain is Threonine--tRNA ligase from Brucella canis (strain ATCC 23365 / NCTC 10854 / RM-666).